We begin with the raw amino-acid sequence, 146 residues long: D-aminoacyl-tRNA deacylase (146 aa).

Positions 137-138 match the Gly-cisPro motif, important for rejection of L-amino acids motif; that stretch reads GP.

It belongs to the DTD family. In terms of assembly, homodimer.

The protein localises to the cytoplasm. It carries out the reaction glycyl-tRNA(Ala) + H2O = tRNA(Ala) + glycine + H(+). The catalysed reaction is a D-aminoacyl-tRNA + H2O = a tRNA + a D-alpha-amino acid + H(+). Its function is as follows. An aminoacyl-tRNA editing enzyme that deacylates mischarged D-aminoacyl-tRNAs. Also deacylates mischarged glycyl-tRNA(Ala), protecting cells against glycine mischarging by AlaRS. Acts via tRNA-based rather than protein-based catalysis; rejects L-amino acids rather than detecting D-amino acids in the active site. By recycling D-aminoacyl-tRNA to D-amino acids and free tRNA molecules, this enzyme counteracts the toxicity associated with the formation of D-aminoacyl-tRNA entities in vivo and helps enforce protein L-homochirality. The sequence is that of D-aminoacyl-tRNA deacylase from Anoxybacillus flavithermus (strain DSM 21510 / WK1).